A 201-amino-acid chain; its full sequence is MNPLYLASGSPRRRELLTQIGVPFTAISADIDETPLADESPAAYVERLARGKAAAGRGLITSSESQAPACVLGADTAVVLDGRILGKPLDQADALQMLMALSGREHEVFTAIALLDGERCESRVVRSLVRFRPISPAEAALYWASGEPCDKAGGYAIQGLAAVFVAGLNGSYSAVVGLPVCETAELLGHFGIPCWQNLPVR.

Residue D75 is the Proton acceptor of the active site.

Belongs to the Maf family. YhdE subfamily. A divalent metal cation is required as a cofactor.

The protein localises to the cytoplasm. It carries out the reaction dTTP + H2O = dTMP + diphosphate + H(+). It catalyses the reaction UTP + H2O = UMP + diphosphate + H(+). Functionally, nucleoside triphosphate pyrophosphatase that hydrolyzes dTTP and UTP. May have a dual role in cell division arrest and in preventing the incorporation of modified nucleotides into cellular nucleic acids. This is dTTP/UTP pyrophosphatase from Pseudomonas fluorescens (strain ATCC BAA-477 / NRRL B-23932 / Pf-5).